A 394-amino-acid chain; its full sequence is Small ribosomal subunit protein mS79 (rPPR3b) (394 aa).

The transit peptide at 1–24 (MSSLSRFLLRGNFSFSTHTNRRFF) directs the protein to the mitochondrion. PPR repeat units follow at residues 105 to 139 (KEGF…NCKR), 140 to 170 (TALS…LPGK), 176 to 210 (DVAS…GLKP), 211 to 245 (DHIT…NVKR), 246 to 280 (DIRS…ELKP), 281 to 315 (DVFT…GCRP), 316 to 350 (LKFV…RLLV), and 351 to 385 (DEAV…DYLQ).

The protein belongs to the PPR family. P subfamily. Component of the mitochondrial ribosome small subunit.

The protein resides in the mitochondrion. The polypeptide is Small ribosomal subunit protein mS79 (rPPR3b) (Arabidopsis thaliana (Mouse-ear cress)).